A 68-amino-acid chain; its full sequence is EQCGDDVCGAGHCCSEYPPMHCKRVGQLYDLCMASKATKNSGNHLFFCPCDEGMYCDMNSWSCQKRTA.

5 disulfides stabilise this stretch: Cys-3–Cys-14, Cys-8–Cys-22, Cys-13–Cys-48, Cys-32–Cys-56, and Cys-50–Cys-63.

Belongs to the MIT-like AcTx family. As to expression, expressed by the venom gland.

It is found in the secreted. The sequence is that of U1-hexatoxin-Hv1a from Hadronyche versuta (Blue mountains funnel-web spider).